Here is a 386-residue protein sequence, read N- to C-terminus: S-adenosylmethionine synthase (386 aa).

Histidine 14 is a binding site for ATP. Aspartate 16 contributes to the Mg(2+) binding site. Glutamate 42 contacts K(+). L-methionine-binding residues include glutamate 55 and glutamine 98. Residues 98–108 are flexible loop; that stretch reads QSGDISQGVDG. Residues 162 to 164, 230 to 231, aspartate 239, 245 to 246, alanine 262, and lysine 266 each bind ATP; these read DSK, RF, and RK. Aspartate 239 is a binding site for L-methionine. Lysine 270 is a binding site for L-methionine.

The protein belongs to the AdoMet synthase family. As to quaternary structure, homotetramer; dimer of dimers. The cofactor is Mg(2+). It depends on K(+) as a cofactor.

It localises to the cytoplasm. The enzyme catalyses L-methionine + ATP + H2O = S-adenosyl-L-methionine + phosphate + diphosphate. It participates in amino-acid biosynthesis; S-adenosyl-L-methionine biosynthesis; S-adenosyl-L-methionine from L-methionine: step 1/1. Its function is as follows. Catalyzes the formation of S-adenosylmethionine (AdoMet) from methionine and ATP. The overall synthetic reaction is composed of two sequential steps, AdoMet formation and the subsequent tripolyphosphate hydrolysis which occurs prior to release of AdoMet from the enzyme. In Salinibacter ruber (strain DSM 13855 / M31), this protein is S-adenosylmethionine synthase.